The primary structure comprises 292 residues: Phosphatidylserine decarboxylase proenzyme (292 aa).

Active-site charge relay system; for autoendoproteolytic cleavage activity residues include aspartate 89, histidine 146, and serine 252. The active-site Schiff-base intermediate with substrate; via pyruvic acid; for decarboxylase activity is the serine 252. Serine 252 is modified (pyruvic acid (Ser); by autocatalysis).

It belongs to the phosphatidylserine decarboxylase family. PSD-B subfamily. Prokaryotic type I sub-subfamily. In terms of assembly, heterodimer of a large membrane-associated beta subunit and a small pyruvoyl-containing alpha subunit. Pyruvate serves as cofactor. Post-translationally, is synthesized initially as an inactive proenzyme. Formation of the active enzyme involves a self-maturation process in which the active site pyruvoyl group is generated from an internal serine residue via an autocatalytic post-translational modification. Two non-identical subunits are generated from the proenzyme in this reaction, and the pyruvate is formed at the N-terminus of the alpha chain, which is derived from the carboxyl end of the proenzyme. The autoendoproteolytic cleavage occurs by a canonical serine protease mechanism, in which the side chain hydroxyl group of the serine supplies its oxygen atom to form the C-terminus of the beta chain, while the remainder of the serine residue undergoes an oxidative deamination to produce ammonia and the pyruvoyl prosthetic group on the alpha chain. During this reaction, the Ser that is part of the protease active site of the proenzyme becomes the pyruvoyl prosthetic group, which constitutes an essential element of the active site of the mature decarboxylase.

The protein localises to the cell membrane. It catalyses the reaction a 1,2-diacyl-sn-glycero-3-phospho-L-serine + H(+) = a 1,2-diacyl-sn-glycero-3-phosphoethanolamine + CO2. The protein operates within phospholipid metabolism; phosphatidylethanolamine biosynthesis; phosphatidylethanolamine from CDP-diacylglycerol: step 2/2. Catalyzes the formation of phosphatidylethanolamine (PtdEtn) from phosphatidylserine (PtdSer). This chain is Phosphatidylserine decarboxylase proenzyme, found in Shewanella sp. (strain ANA-3).